Reading from the N-terminus, the 317-residue chain is Protein-L-isoaspartate O-methyltransferase (317 aa).

Serine 59 is an active-site residue.

The protein belongs to the methyltransferase superfamily. L-isoaspartyl/D-aspartyl protein methyltransferase family. As to quaternary structure, monomer.

The protein resides in the cytoplasm. It catalyses the reaction [protein]-L-isoaspartate + S-adenosyl-L-methionine = [protein]-L-isoaspartate alpha-methyl ester + S-adenosyl-L-homocysteine. In terms of biological role, catalyzes the methyl esterification of L-isoaspartyl residues in peptides and proteins that result from spontaneous decomposition of normal L-aspartyl and L-asparaginyl residues. It plays a role in the repair and/or degradation of damaged proteins. The polypeptide is Protein-L-isoaspartate O-methyltransferase (pcm) (Thermotoga maritima (strain ATCC 43589 / DSM 3109 / JCM 10099 / NBRC 100826 / MSB8)).